The chain runs to 242 residues: Biosynthetic peptidoglycan transglycosylase (242 aa).

Residues Ile-19–Val-39 form a helical membrane-spanning segment.

This sequence belongs to the glycosyltransferase 51 family.

It is found in the cell inner membrane. It carries out the reaction [GlcNAc-(1-&gt;4)-Mur2Ac(oyl-L-Ala-gamma-D-Glu-L-Lys-D-Ala-D-Ala)](n)-di-trans,octa-cis-undecaprenyl diphosphate + beta-D-GlcNAc-(1-&gt;4)-Mur2Ac(oyl-L-Ala-gamma-D-Glu-L-Lys-D-Ala-D-Ala)-di-trans,octa-cis-undecaprenyl diphosphate = [GlcNAc-(1-&gt;4)-Mur2Ac(oyl-L-Ala-gamma-D-Glu-L-Lys-D-Ala-D-Ala)](n+1)-di-trans,octa-cis-undecaprenyl diphosphate + di-trans,octa-cis-undecaprenyl diphosphate + H(+). The protein operates within cell wall biogenesis; peptidoglycan biosynthesis. Its function is as follows. Peptidoglycan polymerase that catalyzes glycan chain elongation from lipid-linked precursors. This Salmonella agona (strain SL483) protein is Biosynthetic peptidoglycan transglycosylase.